We begin with the raw amino-acid sequence, 288 residues long: Shikimate dehydrogenase (NADP(+)) (288 aa).

Residues 15-17 (SKS) and threonine 64 each bind shikimate. The Proton acceptor role is filled by lysine 68. Glutamate 83 is an NADP(+) binding site. Residues asparagine 92 and aspartate 117 each contribute to the shikimate site. Residues 141–145 (GAGGA), 165–170 (NRTLSK), and methionine 232 contribute to the NADP(+) site. Residue tyrosine 234 participates in shikimate binding. Glycine 254 is an NADP(+) binding site.

This sequence belongs to the shikimate dehydrogenase family. Homodimer.

The catalysed reaction is shikimate + NADP(+) = 3-dehydroshikimate + NADPH + H(+). The protein operates within metabolic intermediate biosynthesis; chorismate biosynthesis; chorismate from D-erythrose 4-phosphate and phosphoenolpyruvate: step 4/7. Involved in the biosynthesis of the chorismate, which leads to the biosynthesis of aromatic amino acids. Catalyzes the reversible NADPH linked reduction of 3-dehydroshikimate (DHSA) to yield shikimate (SA). The protein is Shikimate dehydrogenase (NADP(+)) of Psychrobacter arcticus (strain DSM 17307 / VKM B-2377 / 273-4).